A 515-amino-acid polypeptide reads, in one-letter code: N-fatty-acyl-amino acid synthase/hydrolase PM20D1.1 (515 aa).

Positions 1–34 are cleaved as a signal peptide; sequence MKTKFTKKTVLKFFGILFAILLLSVLILFSVVIG. N-linked (GlcNAc...) asparagine glycans are attached at residues asparagine 50, asparagine 87, and asparagine 118. Histidine 140 lines the Zn(2+) pocket. Aspartate 142 is an active-site residue. Aspartate 173 serves as a coordination point for Zn(2+). Glutamate 207 functions as the Proton acceptor in the catalytic mechanism. Zn(2+)-binding residues include glutamate 208, aspartate 234, and histidine 480.

This sequence belongs to the peptidase M20A family. Requires Zn(2+) as cofactor.

It is found in the secreted. It carries out the reaction an N-acyl-L-amino acid + H2O = an L-alpha-amino acid + a carboxylate. It catalyses the reaction an N-acyl-aromatic L-alpha-amino acid + H2O = an aromatic L-alpha-amino acid + a carboxylate. The enzyme catalyses N-(5Z,8Z,11Z,14Z)-eicosatetraenoyl-glycine + H2O = (5Z,8Z,11Z,14Z)-eicosatetraenoate + glycine. The catalysed reaction is N-hexadecanoyl-L-phenylalanine + H2O = hexadecanoate + L-phenylalanine. It carries out the reaction N-octadecanoyl-L-phenylalanine + H2O = octadecanoate + L-phenylalanine. It catalyses the reaction N-(4Z,7Z,10Z,13Z,16Z,19Z-docosahexaenoyl)-L-phenylalanine + H2O = (4Z,7Z,10Z,13Z,16Z,19Z)-docosahexaenoate + L-phenylalanine. The enzyme catalyses N-(9Z-octadecenoyl)-L-asparagine + H2O = L-asparagine + (9Z)-octadecenoate. The catalysed reaction is (9Z)-octadecenoate + glycine = N-(9Z-octadecenoyl)glycine + H2O. It carries out the reaction N-(9Z-octadecenoyl)-L-lysine + H2O = L-lysine + (9Z)-octadecenoate. It catalyses the reaction N-(9Z-octadecenoyl)-L-methionine + H2O = (9Z)-octadecenoate + L-methionine. The enzyme catalyses N-(9Z-octadecenoyl)-L-serine + H2O = L-serine + (9Z)-octadecenoate. The catalysed reaction is N-(9Z-octadecenoyl)-L-tryptophan + H2O = L-tryptophan + (9Z)-octadecenoate. It carries out the reaction N-(9Z-octadecenoyl)-L-tyrosine + H2O = L-tyrosine + (9Z)-octadecenoate. It catalyses the reaction N-(9Z-octadecenoyl)-L-glutamine + H2O = L-glutamine + (9Z)-octadecenoate. The enzyme catalyses N-(5Z,8Z,11Z,14Z-eicosatetraenoyl)-L-serine + H2O = (5Z,8Z,11Z,14Z)-eicosatetraenoate + L-serine. The catalysed reaction is (5Z,8Z,11Z,14Z)-eicosatetraenoate + L-phenylalanine = N-(5Z,8Z,11Z,14Z-eicosatetraenoyl)-L-phenylalanine + H2O. It carries out the reaction N-(9Z-octadecenoyl)-L-leucine + H2O = L-leucine + (9Z)-octadecenoate. It catalyses the reaction L-phenylalanine + (9Z)-octadecenoate = N-(9Z-octadecenoyl)-L-phenylalanine + H2O. The protein operates within amino-acid metabolism. Its pathway is energy metabolism; electron transfer. It functions in the pathway lipid metabolism; fatty acid metabolism. Lipoproteins are powerful coactivators of PM20D1 activity in vitro and NAA biosynthesis in vivo. Its function is as follows. Secreted enzyme that regulates the endogenous N-fatty acyl amino acid (NAAs) tissue and circulating levels by functioning as a bidirectional NAA synthase/hydrolase. It condenses free fatty acids and free amino acids to generate NAAs and bidirectionally catalyzes the reverse hydrolysis reaction. Some of these NAAs stimulate oxidative metabolism via mitochondrial uncoupling, increasing energy expenditure in a UPC1-independent manner. Thereby, this secreted protein may indirectly regulate whole body energy expenditure. PM20D1 circulates in tight association with both low- and high-density (LDL and HDL,respectively) lipoprotein particles. This is N-fatty-acyl-amino acid synthase/hydrolase PM20D1.1 from Danio rerio (Zebrafish).